The sequence spans 108 residues: BH3-like motif-containing cell death inducer (108 aa).

Positions 5-12 (LPIEGQEI) match the BH3-like motif.

In terms of tissue distribution, ubiquitously expressed.

It localises to the cytoplasm. It is found in the mitochondrion. Its function is as follows. Functions as a proapoptotic molecule through the caspase-dependent mitochondrial pathway of cell death. This chain is BH3-like motif-containing cell death inducer (BLID), found in Homo sapiens (Human).